Reading from the N-terminus, the 166-residue chain is NAD(P)H-quinone oxidoreductase subunit I, chloroplastic (166 aa).

4Fe-4S ferredoxin-type domains follow at residues 55–84 (GRIH…VDWK) and 95–124 (LNYS…MTEE). The [4Fe-4S] cluster site is built by C64, C67, C70, C74, C104, C107, C110, and C114.

The protein belongs to the complex I 23 kDa subunit family. In terms of assembly, NDH is composed of at least 16 different subunits, 5 of which are encoded in the nucleus. It depends on [4Fe-4S] cluster as a cofactor.

The protein localises to the plastid. Its subcellular location is the chloroplast thylakoid membrane. The enzyme catalyses a plastoquinone + NADH + (n+1) H(+)(in) = a plastoquinol + NAD(+) + n H(+)(out). It carries out the reaction a plastoquinone + NADPH + (n+1) H(+)(in) = a plastoquinol + NADP(+) + n H(+)(out). Functionally, NDH shuttles electrons from NAD(P)H:plastoquinone, via FMN and iron-sulfur (Fe-S) centers, to quinones in the photosynthetic chain and possibly in a chloroplast respiratory chain. The immediate electron acceptor for the enzyme in this species is believed to be plastoquinone. Couples the redox reaction to proton translocation, and thus conserves the redox energy in a proton gradient. The sequence is that of NAD(P)H-quinone oxidoreductase subunit I, chloroplastic from Chaetymenia peduncularis (Daisy).